Consider the following 189-residue polypeptide: uncharacterized protein (189 aa).

The Macro domain maps to 1-174 (MKCWTLGDRV…GMEKGVREAL (174 aa)).

This is an uncharacterized protein from Aeropyrum pernix (strain ATCC 700893 / DSM 11879 / JCM 9820 / NBRC 100138 / K1).